The following is a 205-amino-acid chain: GTP cyclohydrolase 1 (205 aa).

The Zn(2+) site is built by Cys93, His96, and Cys166.

This sequence belongs to the GTP cyclohydrolase I family. Homomer.

It catalyses the reaction GTP + H2O = 7,8-dihydroneopterin 3'-triphosphate + formate + H(+). The protein operates within cofactor biosynthesis; 7,8-dihydroneopterin triphosphate biosynthesis; 7,8-dihydroneopterin triphosphate from GTP: step 1/1. This Mycobacterium leprae (strain Br4923) protein is GTP cyclohydrolase 1.